Reading from the N-terminus, the 391-residue chain is Chaperone protein DnaJ (391 aa).

The region spanning 6-70 (DYYEILEVSR…EKRKLYDTYG (65 aa)) is the J domain. The segment at 145–226 (GCIKNVKYTR…CKSRRMVDEV (82 aa)) adopts a CR-type zinc-finger fold. The Zn(2+) site is built by cysteine 158, cysteine 161, cysteine 174, cysteine 177, cysteine 200, cysteine 203, cysteine 214, and cysteine 217. CXXCXGXG motif repeat units follow at residues 158–165 (CPDCNGSG), 174–181 (CSDCNGEG), 200–207 (CPSCKGEG), and 214–221 (CKKCKSRR).

The protein belongs to the DnaJ family. As to quaternary structure, homodimer. Zn(2+) serves as cofactor.

It is found in the cytoplasm. Its function is as follows. Participates actively in the response to hyperosmotic and heat shock by preventing the aggregation of stress-denatured proteins and by disaggregating proteins, also in an autonomous, DnaK-independent fashion. Unfolded proteins bind initially to DnaJ; upon interaction with the DnaJ-bound protein, DnaK hydrolyzes its bound ATP, resulting in the formation of a stable complex. GrpE releases ADP from DnaK; ATP binding to DnaK triggers the release of the substrate protein, thus completing the reaction cycle. Several rounds of ATP-dependent interactions between DnaJ, DnaK and GrpE are required for fully efficient folding. Also involved, together with DnaK and GrpE, in the DNA replication of plasmids through activation of initiation proteins. This chain is Chaperone protein DnaJ, found in Mycoplasmoides gallisepticum (strain R(low / passage 15 / clone 2)) (Mycoplasma gallisepticum).